The primary structure comprises 321 residues: Carnitine monooxygenase reductase subunit (321 aa).

Positions 4 to 109 (YQMFEVQVSQ…STPNNLFALI (106 aa)) constitute an FAD-binding FR-type domain. The region spanning 233-321 (DAFTLVLARS…AKGKRLVLDL (89 aa)) is the 2Fe-2S ferredoxin-type domain. Cys-270, Cys-275, Cys-278, and Cys-308 together coordinate [2Fe-2S] cluster.

It belongs to the PDR/VanB family. CntB subfamily. Composed of an oxygenase subunit (yeaW) and a reductase subunit (yeaX). FMN serves as cofactor. [2Fe-2S] cluster is required as a cofactor.

It catalyses the reaction (R)-carnitine + NADH + O2 + H(+) = (3R)-3-hydroxy-4-oxobutanoate + trimethylamine + NAD(+) + H2O. It carries out the reaction (R)-carnitine + NADPH + O2 + H(+) = (3R)-3-hydroxy-4-oxobutanoate + trimethylamine + NADP(+) + H2O. It participates in amine and polyamine metabolism; carnitine metabolism. In terms of biological role, converts carnitine to trimethylamine and malic semialdehyde. Can also use gamma-butyrobetaine, choline and betaine as substrates. In Escherichia coli (strain K12), this protein is Carnitine monooxygenase reductase subunit (yeaX).